We begin with the raw amino-acid sequence, 392 residues long: ERBB-3 BINDING PROTEIN 1 (392 aa).

Necessary for nucleolar localization regions lie at residues 1-50 (MSSD…IVDI) and 298-392 (HLQP…NAQE). An RNA-binding region spans residues 48–56 (VDICEKGDS). An interaction with RNA region spans residues 355-372 (GIKKKKGGGKKKKAQKAG). The Nuclear localization signal signature appears at 357–367 (KKKKGGGKKKK). Residues 358-369 (KKKGGGKKKKAQ) show a composition bias toward basic residues. Residues 358 to 392 (KKKGGGKKKKAQKAGEKGEASTEAEPMDASSNAQE) form a disordered region.

The protein belongs to the peptidase M24 family. In terms of assembly, component of a ribonucleoprotein complex. Interacts with REIL1 and REIL2. Strongly expressed in calls, roots and flowers, to a lower extent, in stems and siliques, but hardly detectable in leaves.

Its subcellular location is the nucleus. Functionally, binds RNA. Associates with 28S, 18S and 5.8S mature rRNAs, several rRNA precursors and probably U3 small nucleolar RNA. May be involved in regulation of intermediate and late steps of rRNA processing. May be involved in ribosome assembly. Required for expression of cell cycle genes such as CYCD3-1, RNR2A and CDKB1-1. Promotes, in a dose- and auxin-dependent manner, organ growth by stimulating both cell proliferation and expansion, via the regulation of RBR1 levels. The protein is ERBB-3 BINDING PROTEIN 1 of Arabidopsis thaliana (Mouse-ear cress).